We begin with the raw amino-acid sequence, 350 residues long: UDP-N-acetylenolpyruvoylglucosamine reductase (350 aa).

Residues 24–195 (HVDATARWLL…VAVEFNLPLL (172 aa)) form the FAD-binding PCMH-type domain. The active site involves R172. S245 serves as the catalytic Proton donor. The active site involves E342.

The protein belongs to the MurB family. FAD is required as a cofactor.

Its subcellular location is the cytoplasm. It carries out the reaction UDP-N-acetyl-alpha-D-muramate + NADP(+) = UDP-N-acetyl-3-O-(1-carboxyvinyl)-alpha-D-glucosamine + NADPH + H(+). It participates in cell wall biogenesis; peptidoglycan biosynthesis. Cell wall formation. This Xanthomonas campestris pv. campestris (strain 8004) protein is UDP-N-acetylenolpyruvoylglucosamine reductase.